The primary structure comprises 86 residues: Evasin-3 (86 aa).

Positions 1 to 20 are cleaved as a signal peptide; the sequence is MRALLARLLLCVLVVSDSKG. Cystine bridges form between cysteine 42-cysteine 57, cysteine 46-cysteine 59, and cysteine 53-cysteine 70. Asparagine 45 is a glycosylation site (N-linked (GlcNAc...) asparagine). The N-linked (GlcNAc...) asparagine glycan is linked to asparagine 76.

As to quaternary structure, monomer.

It is found in the secreted. Functionally, salivary chemokine-binding protein which shows chemokine neutralizing activity and binds to host chemokines CXCL1, CXCL2, CXCL3, CXCL5, CXCL6 and CXCL8. Binds to CXCL8 with 1:1 stoichiometry. Disrupts CXCL8 homodimer formation, disrupts the glycosaminoglycan-binding site of CXCL8 and inhibits the interaction of CXCL8 with CXCR2. The sequence is that of Evasin-3 from Rhipicephalus sanguineus (Brown dog tick).